Reading from the N-terminus, the 2690-residue chain is Probable polyketide synthase 28 (2690 aa).

Residues 15–443 (YGDVAVIGIG…GSNVCLILSE (429 aa)) enclose the Ketosynthase family 3 (KS3) domain. Residues C187, H326, and H366 each act as for beta-ketoacyl synthase activity in the active site. The interval 651–684 (GVSADIIVGHSLGELSSSYSSGMIDFETLCHLIY) is acyl/malonyl transferases. The For acyl/malonyl transferase activity role is filled by S661. The stretch at 906–934 (NFKSQLTNINNNNNNINNNNNNNNNNNNN) forms a coiled coil. The tract at residues 916–946 (NNNNNINNNNNNNNNNNNNNNNNNNNNNNNN) is disordered. The segment at 973–1102 (HEKITNEGPS…GNFSLFKHNS (130 aa)) is N-terminal hotdog fold. The PKS/mFAS DH domain occupies 973–1285 (HEKITNEGPS…CSSVSLANPS (313 aa)). H1014 (proton acceptor; for dehydratase activity) is an active-site residue. The C-terminal hotdog fold stretch occupies residues 1119 to 1285 (NFTTISKHDF…CSSVSLANPS (167 aa)). D1188 (proton donor; for dehydratase activity) is an active-site residue. The segment at 1401–1429 (LNHHNNSENKNKNNNNNNNSNNNENSNNE) is disordered. The segment covering 1412-1429 (KNNNNNNNSNNNENSNNE) has biased composition (low complexity). Positions 2594-2671 (SDNEFIHSTI…QSIDIIKFGY (78 aa)) constitute a Carrier domain. S2631 is subject to O-(pantetheine 4'-phosphoryl)serine.

It depends on pantetheine 4'-phosphate as a cofactor.

Probable polyketide synthase. The polypeptide is Probable polyketide synthase 28 (pks28) (Dictyostelium discoideum (Social amoeba)).